Here is a 95-residue protein sequence, read N- to C-terminus: Co-chaperonin GroES (95 aa).

Belongs to the GroES chaperonin family. As to quaternary structure, heptamer of 7 subunits arranged in a ring. Interacts with the chaperonin GroEL.

The protein localises to the cytoplasm. Together with the chaperonin GroEL, plays an essential role in assisting protein folding. The GroEL-GroES system forms a nano-cage that allows encapsulation of the non-native substrate proteins and provides a physical environment optimized to promote and accelerate protein folding. GroES binds to the apical surface of the GroEL ring, thereby capping the opening of the GroEL channel. The polypeptide is Co-chaperonin GroES (Vesicomyosocius okutanii subsp. Calyptogena okutanii (strain HA)).